We begin with the raw amino-acid sequence, 159 residues long: Cyclic pyranopterin monophosphate synthase (159 aa).

Substrate is bound by residues 75 to 77 (LCH) and 113 to 114 (ME). The active site involves aspartate 128.

This sequence belongs to the MoaC family. Homohexamer; trimer of dimers.

It catalyses the reaction (8S)-3',8-cyclo-7,8-dihydroguanosine 5'-triphosphate = cyclic pyranopterin phosphate + diphosphate. It functions in the pathway cofactor biosynthesis; molybdopterin biosynthesis. Catalyzes the conversion of (8S)-3',8-cyclo-7,8-dihydroguanosine 5'-triphosphate to cyclic pyranopterin monophosphate (cPMP). This chain is Cyclic pyranopterin monophosphate synthase, found in Photorhabdus laumondii subsp. laumondii (strain DSM 15139 / CIP 105565 / TT01) (Photorhabdus luminescens subsp. laumondii).